The primary structure comprises 342 residues: Spore photoproduct lyase (342 aa).

In terms of domain architecture, Radical SAM core spans 77–305; the sequence is SKPSAEYAIP…EEKRRYKWGR (229 aa). Positions 91, 95, and 98 each coordinate [4Fe-4S] cluster. Positions 218–235 form a DNA-binding region, H-T-H motif; sequence EAAVKVAKAGYPLGFIVA.

This sequence belongs to the radical SAM superfamily. SPL family. In terms of assembly, monomer or homodimer. The cofactor is [4Fe-4S] cluster. It depends on S-adenosyl-L-methionine as a cofactor.

It catalyses the reaction (5R)-5,6-dihydro-5-(thymidin-7-yl)thymidine in DNA = a thymidine dimer in DNA. Functionally, involved in repair of UV radiation-induced DNA damage during spore germination. Can repair thymine dimer 5-thyminyl-5,6-dihydrothymine (known as spore photoproduct (SP)) by in situ monomerization of SP to two thymines. The protein is Spore photoproduct lyase (splB) of Bacillus subtilis (strain 168).